The following is a 252-amino-acid chain: Phosphate import ATP-binding protein PstB 2 (252 aa).

Residues 6-247 enclose the ABC transporter domain; that stretch reads ISINDLSVYF…PQHKETEDYI (242 aa). An ATP-binding site is contributed by 38–45; sequence GPSGSGKS.

It belongs to the ABC transporter superfamily. Phosphate importer (TC 3.A.1.7) family. The complex is composed of two ATP-binding proteins (PstB), two transmembrane proteins (PstC and PstA) and a solute-binding protein (PstS).

Its subcellular location is the cell membrane. It carries out the reaction phosphate(out) + ATP + H2O = ADP + 2 phosphate(in) + H(+). Its function is as follows. Part of the ABC transporter complex PstSACB involved in phosphate import. Responsible for energy coupling to the transport system. The sequence is that of Phosphate import ATP-binding protein PstB 2 from Streptococcus thermophilus (strain CNRZ 1066).